The primary structure comprises 481 residues: Proline--tRNA ligase (481 aa).

Belongs to the class-II aminoacyl-tRNA synthetase family. ProS type 3 subfamily. In terms of assembly, homodimer.

It localises to the cytoplasm. It catalyses the reaction tRNA(Pro) + L-proline + ATP = L-prolyl-tRNA(Pro) + AMP + diphosphate. Its function is as follows. Catalyzes the attachment of proline to tRNA(Pro) in a two-step reaction: proline is first activated by ATP to form Pro-AMP and then transferred to the acceptor end of tRNA(Pro). In Saccharolobus islandicus (strain Y.N.15.51 / Yellowstone #2) (Sulfolobus islandicus), this protein is Proline--tRNA ligase.